The primary structure comprises 158 residues: MTSLVVPGLDTLRQWLDDLGMSFFECDNCQALHLPHMQNFDGVFDAKIDLIDNTILFSAMAEVRPSAVLPLAADLSAINASSLTVKAFLDMQDDNLPKLVVCQSLSVMQGVTYEQFAWFVRQSEEQISMVILEANAHQLLLPTDDEGQNNVTENYFLH.

This is an uncharacterized protein from Escherichia coli O157:H7.